The following is a 171-amino-acid chain: Sigma intracellular receptor 2 (171 aa).

Over 1–6 (MAVCAR) the chain is Cytoplasmic. Residues 7–27 (LLEWIFFFYFFSHIPITLLVD) traverse the membrane as a helical segment. In terms of domain architecture, EXPERA spans 8 to 153 (LEWIFFFYFF…PYLLVPVLLL (146 aa)). The Lumenal portion of the chain corresponds to 28-66 (LQAVLPPSLYPQELLDLMKWYTVAFKDHLMANPPPWFKS). A helical membrane pass occupies residues 67 to 87 (FVYCEAILQLPFFPVAAYAFF). The cholesterol site is built by I73 and Q75. The Cytoplasmic segment spans residues 88-97 (KGGCKWIRIP). The chain crosses the membrane as a helical span at residues 98-118 (AIVYSAHVATTVIAIIGHILF). Residues 119 to 137 (GEFPKSDVIAPLTQKDRLT) are Lumenal-facing. The chain crosses the membrane as a helical span at residues 138 to 158 (LVSIYAPYLLVPVLLLLTMLF). The Cytoplasmic portion of the chain corresponds to 159–171 (SPRYRQEEKRKRK). The ER retention motif motif lies at 167–171 (KRKRK).

This sequence belongs to the TMEM97/sigma-2 receptor family. In terms of assembly, homodimer.

The protein localises to the rough endoplasmic reticulum membrane. It is found in the nucleus membrane. Sigma-2 receptor which contributes to ameliorate dysfunctional cellular processes and slow degenerative progression by regulating cell functions including cholesterol biosynthesis/trafficking, membrane trafficking, autophagy, lipid membrane-bound protein trafficking, and receptor stabilization at the cell surface. Forms a ternary complex with PGRMC1 receptor and low density lipoprotein receptor/LDLR at the plasma membrane, which increases LDLR-mediated LDL cholesterol internalization. Decreases lysosomal sterol transporter NPC1 availability to the cell, probably through NPC1-binding, hence controlling lipid transport, including cholesterol and LBPA, outside of late endosome/lysosome. Binds regio- and stereoselective ligand 20(S)-hydroxycholesterol (20(S)-OHC), thereby linking OHC binding to cholesterol homeostasis. Also able to bind cholesterol. Binds histatin 1 (Hst 1)/HN1 salivary peptide at the ER membrane, which is critical for increasing mitochondria-ER contacts and stimulating Hst1 wound healing properties. May alter the activity of some cytochrome P450 proteins. Although shows homologies with sterol isomerases (EXPERA domain), not able to catalyze sterol isomerization. However, may act as sensors of these molecules. Acts as a quality control factor in the ER, promoting the proteolytic degradation of nonproductive and extramitochondrial precursor proteins in the ER membrane thus removing them from the ER surface. The polypeptide is Sigma intracellular receptor 2 (tmem97) (Xenopus tropicalis (Western clawed frog)).